The following is a 465-amino-acid chain: UDP-N-acetylmuramate--L-alanine ligase (465 aa).

ATP is bound at residue 115-121 (GAHGKTT).

Belongs to the MurCDEF family.

Its subcellular location is the cytoplasm. The enzyme catalyses UDP-N-acetyl-alpha-D-muramate + L-alanine + ATP = UDP-N-acetyl-alpha-D-muramoyl-L-alanine + ADP + phosphate + H(+). Its pathway is cell wall biogenesis; peptidoglycan biosynthesis. In terms of biological role, cell wall formation. The polypeptide is UDP-N-acetylmuramate--L-alanine ligase (Coxiella burnetii (strain CbuK_Q154) (Coxiella burnetii (strain Q154))).